The sequence spans 153 residues: Aspartate carbamoyltransferase regulatory chain (153 aa).

Positions 109, 114, 138, and 141 each coordinate Zn(2+).

Belongs to the PyrI family. In terms of assembly, contains catalytic and regulatory chains. Zn(2+) is required as a cofactor.

Its function is as follows. Involved in allosteric regulation of aspartate carbamoyltransferase. The polypeptide is Aspartate carbamoyltransferase regulatory chain (Vibrio campbellii (strain ATCC BAA-1116)).